The chain runs to 307 residues: Shikimate kinase 2, chloroplastic (307 aa).

A chloroplast-targeting transit peptide spans 1–60; it reads MEARAGLAMQSRAAVGVGAGPGVGRRGRAVIRVGKRPTAASLRVGGPAGPAAAKPLAPLY. 101 to 108 contacts ATP; it reads GMMGSGKS. Ser108 is a Mg(2+) binding site. Asp126, Arg151, and Gly173 together coordinate substrate. Arg212 is an ATP binding site. Residues 285–307 are disordered; it reads HSTSSGPVGDLIVDSQNRRTKAL.

Belongs to the shikimate kinase family. Mg(2+) is required as a cofactor. Expressed in panicles.

Its subcellular location is the plastid. The protein resides in the chloroplast. It catalyses the reaction shikimate + ATP = 3-phosphoshikimate + ADP + H(+). The protein operates within metabolic intermediate biosynthesis; chorismate biosynthesis; chorismate from D-erythrose 4-phosphate and phosphoenolpyruvate: step 5/7. Its function is as follows. Catalyzes the specific phosphorylation of the 3-hydroxyl group of shikimic acid using ATP as a cosubstrate. This Oryza sativa subsp. japonica (Rice) protein is Shikimate kinase 2, chloroplastic (SK2).